We begin with the raw amino-acid sequence, 104 residues long: Met repressor (104 aa).

The protein belongs to the MetJ family. As to quaternary structure, homodimer.

Its subcellular location is the cytoplasm. This regulatory protein, when combined with SAM (S-adenosylmethionine) represses the expression of the methionine regulon and of enzymes involved in SAM synthesis. This is Met repressor from Shewanella oneidensis (strain ATCC 700550 / JCM 31522 / CIP 106686 / LMG 19005 / NCIMB 14063 / MR-1).